A 125-amino-acid chain; its full sequence is Small ribosomal subunit protein uS12 (125 aa).

Aspartate 89 is subject to 3-methylthioaspartic acid. Residues 100-125 (GSLDTQGVKDRKQSRSKYGAKRPKAA) form a disordered region. The segment covering 113 to 125 (SRSKYGAKRPKAA) has biased composition (basic residues).

This sequence belongs to the universal ribosomal protein uS12 family. Part of the 30S ribosomal subunit. Contacts proteins S8 and S17. May interact with IF1 in the 30S initiation complex.

In terms of biological role, with S4 and S5 plays an important role in translational accuracy. Functionally, interacts with and stabilizes bases of the 16S rRNA that are involved in tRNA selection in the A site and with the mRNA backbone. Located at the interface of the 30S and 50S subunits, it traverses the body of the 30S subunit contacting proteins on the other side and probably holding the rRNA structure together. The combined cluster of proteins S8, S12 and S17 appears to hold together the shoulder and platform of the 30S subunit. This is Small ribosomal subunit protein uS12 from Dechloromonas aromatica (strain RCB).